The chain runs to 179 residues: Large ribosomal subunit protein uL5 (179 aa).

This sequence belongs to the universal ribosomal protein uL5 family. As to quaternary structure, part of the 50S ribosomal subunit; part of the 5S rRNA/L5/L18/L25 subcomplex. Contacts the 5S rRNA and the P site tRNA. Forms a bridge to the 30S subunit in the 70S ribosome.

This is one of the proteins that bind and probably mediate the attachment of the 5S RNA into the large ribosomal subunit, where it forms part of the central protuberance. In the 70S ribosome it contacts protein S13 of the 30S subunit (bridge B1b), connecting the 2 subunits; this bridge is implicated in subunit movement. Contacts the P site tRNA; the 5S rRNA and some of its associated proteins might help stabilize positioning of ribosome-bound tRNAs. The protein is Large ribosomal subunit protein uL5 of Prochlorococcus marinus (strain MIT 9301).